The sequence spans 457 residues: Multidrug resistance protein MdtK (457 aa).

12 helical membrane-spanning segments follow: residues 11 to 31 (LLAL…MGFV), 53 to 73 (IWLP…PVIA), 93 to 113 (WLAG…GYII), 127 to 147 (AVGY…FQVA), 160 to 180 (GMVM…IFIY), 188 to 208 (LGGI…FIAM), 243 to 263 (LPIA…ALLV), 276 to 296 (IALN…AAVT), 314 to 334 (AART…IFTV), 350 to 370 (VVAL…SDSI), 387 to 407 (IFFI…YILA), and 418 to 438 (PAGF…LMML).

Belongs to the multi antimicrobial extrusion (MATE) (TC 2.A.66.1) family. MdtK subfamily.

The protein resides in the cell inner membrane. Multidrug efflux pump that functions probably as a Na(+)/drug antiporter. The polypeptide is Multidrug resistance protein MdtK (Salmonella newport (strain SL254)).